We begin with the raw amino-acid sequence, 562 residues long: 2-succinyl-5-enolpyruvyl-6-hydroxy-3-cyclohexene-1-carboxylate synthase (562 aa).

Belongs to the TPP enzyme family. MenD subfamily. As to quaternary structure, homodimer. The cofactor is Mg(2+). Mn(2+) is required as a cofactor. Thiamine diphosphate serves as cofactor.

The enzyme catalyses isochorismate + 2-oxoglutarate + H(+) = 5-enolpyruvoyl-6-hydroxy-2-succinyl-cyclohex-3-ene-1-carboxylate + CO2. Its pathway is quinol/quinone metabolism; 1,4-dihydroxy-2-naphthoate biosynthesis; 1,4-dihydroxy-2-naphthoate from chorismate: step 2/7. It participates in cofactor biosynthesis; phylloquinone biosynthesis. Catalyzes the thiamine diphosphate-dependent decarboxylation of 2-oxoglutarate and the subsequent addition of the resulting succinic semialdehyde-thiamine pyrophosphate anion to isochorismate to yield 2-succinyl-5-enolpyruvyl-6-hydroxy-3-cyclohexene-1-carboxylate (SEPHCHC). The protein is 2-succinyl-5-enolpyruvyl-6-hydroxy-3-cyclohexene-1-carboxylate synthase of Thermosynechococcus vestitus (strain NIES-2133 / IAM M-273 / BP-1).